The chain runs to 371 residues: N-acetyldiaminopimelate deacetylase (371 aa).

Residue Asp68 is part of the active site. Glu127 serves as the catalytic Proton acceptor.

Belongs to the peptidase M20A family. N-acetyldiaminopimelate deacetylase subfamily.

It carries out the reaction N-acetyl-(2S,6S)-2,6-diaminopimelate + H2O = (2S,6S)-2,6-diaminopimelate + acetate. It participates in amino-acid biosynthesis; L-lysine biosynthesis via DAP pathway; LL-2,6-diaminopimelate from (S)-tetrahydrodipicolinate (acetylase route): step 3/3. In terms of biological role, catalyzes the conversion of N-acetyl-diaminopimelate to diaminopimelate and acetate. The sequence is that of N-acetyldiaminopimelate deacetylase from Oceanobacillus iheyensis (strain DSM 14371 / CIP 107618 / JCM 11309 / KCTC 3954 / HTE831).